We begin with the raw amino-acid sequence, 438 residues long: Proline--tRNA ligase (438 aa).

Belongs to the class-II aminoacyl-tRNA synthetase family. ProS type 2 subfamily. In terms of assembly, homodimer.

Its subcellular location is the cytoplasm. The catalysed reaction is tRNA(Pro) + L-proline + ATP = L-prolyl-tRNA(Pro) + AMP + diphosphate. Catalyzes the attachment of proline to tRNA(Pro) in a two-step reaction: proline is first activated by ATP to form Pro-AMP and then transferred to the acceptor end of tRNA(Pro). The sequence is that of Proline--tRNA ligase from Rhodopseudomonas palustris (strain TIE-1).